A 1477-amino-acid chain; its full sequence is Neuralized-like protein 4 (1477 aa).

Disordered regions lie at residues 1–26 and 168–196; these read MAEL…RKQP and QPPP…RPDK. The NHR 1 domain maps to 1–167; that stretch reads MAELHPRTGK…KCTQITVLSC (167 aa). The span at 171-183 shows a compositional bias: acidic residues; sequence PEEEEEEDAEEQE. NHR domains are found at residues 250 to 417, 450 to 616, 645 to 813, and 841 to 1010; these read ALLF…IVHN, QLLF…IMDE, DLRF…LTGG, and SHRF…TVSS. The segment at 1012-1041 is disordered; sequence LLEEPDATKPPSITSESEEEEDPADHGDPH. The NHR 6 domain maps to 1048–1211; it reads SLQFLANHGK…QCEQVSIVTG (164 aa).

Ubiquitinated. This ubiquitination leads to proteasomal degradation.

It is found in the cytoplasm. Its subcellular location is the cytoskeleton. It localises to the microtubule organizing center. The protein localises to the centrosome. The protein resides in the centriole. In terms of biological role, promotes CCP110 ubiquitination and proteasome-dependent degradation. By counteracting accumulation of CP110, maintains normal centriolar homeostasis and preventing formation of ectopic microtubular organizing centers. This chain is Neuralized-like protein 4 (neurl4), found in Xenopus tropicalis (Western clawed frog).